The sequence spans 207 residues: Proteasome subunit beta 1 (207 aa).

A propeptide spans 1-9 (MWALDKIKG) (removed in mature form; by autocatalysis). T10 functions as the Nucleophile in the catalytic mechanism.

It belongs to the peptidase T1B family. The 20S proteasome core is composed of 14 alpha and 14 beta subunits that assemble into four stacked heptameric rings, resulting in a barrel-shaped structure. The two inner rings, each composed of seven catalytic beta subunits, are sandwiched by two outer rings, each composed of seven alpha subunits. The catalytic chamber with the active sites is on the inside of the barrel. Has a gated structure, the ends of the cylinder being occluded by the N-termini of the alpha-subunits. Is capped at one or both ends by the proteasome regulatory ATPase, PAN.

The protein resides in the cytoplasm. The enzyme catalyses Cleavage of peptide bonds with very broad specificity.. With respect to regulation, the formation of the proteasomal ATPase PAN-20S proteasome complex, via the docking of the C-termini of PAN into the intersubunit pockets in the alpha-rings, triggers opening of the gate for substrate entry. Interconversion between the open-gate and close-gate conformations leads to a dynamic regulation of the 20S proteasome proteolysis activity. Functionally, component of the proteasome core, a large protease complex with broad specificity involved in protein degradation. This Thermococcus sibiricus (strain DSM 12597 / MM 739) protein is Proteasome subunit beta 1.